The primary structure comprises 455 residues: Enolase (455 aa).

Gln-166 contributes to the (2R)-2-phosphoglycerate binding site. The Proton donor role is filled by Glu-208. Mg(2+) is bound by residues Asp-249, Glu-311, and Asp-338. (2R)-2-phosphoglycerate contacts are provided by Lys-363, Arg-392, Ser-393, and Lys-414. Lys-363 acts as the Proton acceptor in catalysis.

Belongs to the enolase family. Mg(2+) is required as a cofactor.

Its subcellular location is the cytoplasm. The protein resides in the secreted. It localises to the cell surface. It catalyses the reaction (2R)-2-phosphoglycerate = phosphoenolpyruvate + H2O. The protein operates within carbohydrate degradation; glycolysis; pyruvate from D-glyceraldehyde 3-phosphate: step 4/5. Catalyzes the reversible conversion of 2-phosphoglycerate (2-PG) into phosphoenolpyruvate (PEP). It is essential for the degradation of carbohydrates via glycolysis. This is Enolase from Mycoplasma mobile (strain ATCC 43663 / 163K / NCTC 11711) (Mesomycoplasma mobile).